Here is a 271-residue protein sequence, read N- to C-terminus: Sec-independent protein translocase protein TatC (271 aa).

5 helical membrane passes run 24–44 (ISVG…EQIF), 78–98 (FFAG…LFIA), 112–132 (FLFV…YFVF), 159–179 (LVIK…GLLL), and 215–235 (FTQV…IFFG). The segment at 247-271 (AAEEAQWAADHNVDDDDVDHPEHKA) is disordered.

Belongs to the TatC family. The Tat system comprises two distinct complexes: a TatABC complex, containing multiple copies of TatA, TatB and TatC subunits, and a separate TatA complex, containing only TatA subunits. Substrates initially bind to the TatABC complex, which probably triggers association of the separate TatA complex to form the active translocon.

The protein resides in the cell inner membrane. Functionally, part of the twin-arginine translocation (Tat) system that transports large folded proteins containing a characteristic twin-arginine motif in their signal peptide across membranes. Together with TatB, TatC is part of a receptor directly interacting with Tat signal peptides. The chain is Sec-independent protein translocase protein TatC from Magnetococcus marinus (strain ATCC BAA-1437 / JCM 17883 / MC-1).